The chain runs to 309 residues: Homoserine kinase (309 aa).

An ATP-binding site is contributed by 91-101; the sequence is PVGSGLGSSAC.

Belongs to the GHMP kinase family. Homoserine kinase subfamily.

The protein localises to the cytoplasm. The catalysed reaction is L-homoserine + ATP = O-phospho-L-homoserine + ADP + H(+). Its pathway is amino-acid biosynthesis; L-threonine biosynthesis; L-threonine from L-aspartate: step 4/5. Its function is as follows. Catalyzes the ATP-dependent phosphorylation of L-homoserine to L-homoserine phosphate. The protein is Homoserine kinase of Hamiltonella defensa subsp. Acyrthosiphon pisum (strain 5AT).